The chain runs to 500 residues: Probable malate:quinone oxidoreductase (500 aa).

It belongs to the MQO family. The cofactor is FAD.

The enzyme catalyses (S)-malate + a quinone = a quinol + oxaloacetate. Its pathway is carbohydrate metabolism; tricarboxylic acid cycle; oxaloacetate from (S)-malate (quinone route): step 1/1. The polypeptide is Probable malate:quinone oxidoreductase (Bacillus cereus (strain AH187)).